Reading from the N-terminus, the 510-residue chain is NAD(P)H-quinone oxidoreductase subunit 2 B, chloroplastic (510 aa).

13 consecutive transmembrane segments (helical) span residues L24 to L44, I57 to F77, I99 to I119, M124 to C144, I150 to T170, Y183 to G203, I229 to F249, W295 to I315, M323 to D343, Y354 to L374, A395 to F415, L418 to L438, and M484 to I504.

The protein belongs to the complex I subunit 2 family. As to quaternary structure, NDH is composed of at least 16 different subunits, 5 of which are encoded in the nucleus.

It localises to the plastid. The protein localises to the chloroplast thylakoid membrane. It catalyses the reaction a plastoquinone + NADH + (n+1) H(+)(in) = a plastoquinol + NAD(+) + n H(+)(out). The enzyme catalyses a plastoquinone + NADPH + (n+1) H(+)(in) = a plastoquinol + NADP(+) + n H(+)(out). In terms of biological role, NDH shuttles electrons from NAD(P)H:plastoquinone, via FMN and iron-sulfur (Fe-S) centers, to quinones in the photosynthetic chain and possibly in a chloroplast respiratory chain. The immediate electron acceptor for the enzyme in this species is believed to be plastoquinone. Couples the redox reaction to proton translocation, and thus conserves the redox energy in a proton gradient. This Drimys granadensis protein is NAD(P)H-quinone oxidoreductase subunit 2 B, chloroplastic.